Here is a 242-residue protein sequence, read N- to C-terminus: Carboxy-S-adenosyl-L-methionine synthase (242 aa).

Residues tyrosine 39, 64-66, 89-90, 117-118, asparagine 132, and arginine 199 each bind S-adenosyl-L-methionine; these read GCS, DN, and DI.

This sequence belongs to the class I-like SAM-binding methyltransferase superfamily. Cx-SAM synthase family. As to quaternary structure, homodimer.

The enzyme catalyses prephenate + S-adenosyl-L-methionine = carboxy-S-adenosyl-L-methionine + 3-phenylpyruvate + H2O. Functionally, catalyzes the conversion of S-adenosyl-L-methionine (SAM) to carboxy-S-adenosyl-L-methionine (Cx-SAM). The polypeptide is Carboxy-S-adenosyl-L-methionine synthase (Aliivibrio fischeri (strain MJ11) (Vibrio fischeri)).